The chain runs to 288 residues: Polyamine aminopropyltransferase (288 aa).

The PABS domain occupies 9–238 (ETLHDQFGQY…GIMTFAWATD (230 aa)). Residue Q33 coordinates S-methyl-5'-thioadenosine. Spermidine-binding residues include H64 and D88. Residues E108 and 140-141 (DG) each bind S-methyl-5'-thioadenosine. Catalysis depends on D158, which acts as the Proton acceptor. A spermidine-binding site is contributed by 158–161 (DCTD). Residue P165 participates in S-methyl-5'-thioadenosine binding.

The protein belongs to the spermidine/spermine synthase family. As to quaternary structure, homodimer or homotetramer.

It is found in the cytoplasm. It carries out the reaction S-adenosyl 3-(methylsulfanyl)propylamine + putrescine = S-methyl-5'-thioadenosine + spermidine + H(+). The protein operates within amine and polyamine biosynthesis; spermidine biosynthesis; spermidine from putrescine: step 1/1. Functionally, catalyzes the irreversible transfer of a propylamine group from the amino donor S-adenosylmethioninamine (decarboxy-AdoMet) to putrescine (1,4-diaminobutane) to yield spermidine. This Escherichia coli (strain UTI89 / UPEC) protein is Polyamine aminopropyltransferase.